The following is a 131-amino-acid chain: Profilin-4 (131 aa).

Cys-13 and Cys-115 are joined by a disulfide. Residues Ala-81–Thr-97 carry the Involved in PIP2 interaction motif. Thr-111 carries the post-translational modification Phosphothreonine.

Belongs to the profilin family. Occurs in many kinds of cells as a complex with monomeric actin in a 1:1 ratio. Phosphorylated by MAP kinases.

It localises to the cytoplasm. Its subcellular location is the cytoskeleton. Its function is as follows. Binds to actin and affects the structure of the cytoskeleton. At high concentrations, profilin prevents the polymerization of actin, whereas it enhances it at low concentrations. In Olea europaea (Common olive), this protein is Profilin-4.